Reading from the N-terminus, the 275-residue chain is Large ribosomal subunit protein uL2 (275 aa).

Positions 223–275 are disordered; that stretch reads VAMNPIDHPHGGGEGRTSGGRHPVSPWGVPTKGYKTRSNKRTDKYIVRRRNKK.

Belongs to the universal ribosomal protein uL2 family. Part of the 50S ribosomal subunit. Forms a bridge to the 30S subunit in the 70S ribosome.

Its function is as follows. One of the primary rRNA binding proteins. Required for association of the 30S and 50S subunits to form the 70S ribosome, for tRNA binding and peptide bond formation. It has been suggested to have peptidyltransferase activity; this is somewhat controversial. Makes several contacts with the 16S rRNA in the 70S ribosome. The protein is Large ribosomal subunit protein uL2 of Shewanella woodyi (strain ATCC 51908 / MS32).